A 312-amino-acid chain; its full sequence is Serpentine receptor class gamma-31 (312 aa).

The next 7 membrane-spanning stretches (helical) occupy residues 6–26 (LITQ…TVVF), 38–58 (FLKL…NFYI), 92–112 (FIFC…LTSI), 132–152 (TYIL…PLLV), 180–200 (FILV…IICW), 218–238 (LFLV…IAML), and 259–279 (LLSP…LIIF).

The protein belongs to the nematode receptor-like protein srg family.

The protein localises to the membrane. The sequence is that of Serpentine receptor class gamma-31 (srg-31) from Caenorhabditis elegans.